A 123-amino-acid chain; its full sequence is UPF0102 protein CLM_2733 (123 aa).

It belongs to the UPF0102 family.

The polypeptide is UPF0102 protein CLM_2733 (Clostridium botulinum (strain Kyoto / Type A2)).